Consider the following 1917-residue polypeptide: Diacylglycerol kinase eta (1917 aa).

A compositionally biased stretch (basic and acidic residues) spans 1-10; that stretch reads MSHLKLDTLH. Residues 1–37 are disordered; that stretch reads MSHLKLDTLHVQRSPRGSRRSSRSSGRSSACSSGSIS. Over residues 23 to 37 the composition is skewed to low complexity; the sequence is RSSGRSSACSSGSIS. The 94-residue stretch at 82 to 175 folds into the PH domain; that stretch reads AIIKEGFLLK…WLGSLKTATA (94 aa). Phorbol-ester/DAG-type zinc fingers lie at residues 195–245 and 268–319; these read HHHW…IANC and PHQW…AVAC. The DAGKc domain maps to 350–486; that stretch reads GNFSPLLVFV…DRWSIMVFEK (137 aa). Disordered regions lie at residues 1015 to 1053, 1114 to 1149, and 1380 to 1399; these read TTLCSEHAGPPKPPRKKSLSALSRTQAHPRRRNSSPPRI, LEQQQRDGDNDTEYPEQQQTPTNKGPNSLATTSEDE, and KDKDEKGGKDKDKTPTEETN. The span at 1128–1145 shows a compositional bias: polar residues; it reads PEQQQTPTNKGPNSLATT. One can recognise an SAM domain in the interval 1854-1917; the sequence is WSVNEVVTWL…LQAIKDLSEN (64 aa).

Belongs to the eukaryotic diacylglycerol kinase family.

It is found in the cytoplasm. The enzyme catalyses a 1,2-diacyl-sn-glycerol + ATP = a 1,2-diacyl-sn-glycero-3-phosphate + ADP + H(+). Functionally, phosphorylates diacylglycerol (DAG) to generate phosphatidic acid (PA). In Drosophila yakuba (Fruit fly), this protein is Diacylglycerol kinase eta.